The primary structure comprises 135 residues: MTMTDPIADMLTRLRNANQAYHDAVSMPYSKLKQGVADILKQEGYITSYDVTEPAEGEVGKTLTITLKYGRNRERSIAGVRRISKPGLRVYAKHTGLPKVLGGLGVAIISTSQGLLTDRQANQKGVGGEVLAYVW.

The protein belongs to the universal ribosomal protein uS8 family. Part of the 30S ribosomal subunit. Contacts proteins S5 and S12.

Its function is as follows. One of the primary rRNA binding proteins, it binds directly to 16S rRNA central domain where it helps coordinate assembly of the platform of the 30S subunit. In Nocardioides sp. (strain ATCC BAA-499 / JS614), this protein is Small ribosomal subunit protein uS8.